The primary structure comprises 130 residues: ATP synthase epsilon chain (130 aa).

This sequence belongs to the ATPase epsilon chain family. As to quaternary structure, F-type ATPases have 2 components, CF(1) - the catalytic core - and CF(0) - the membrane proton channel. CF(1) has five subunits: alpha(3), beta(3), gamma(1), delta(1), epsilon(1). CF(0) has three main subunits: a, b and c.

The protein localises to the cell inner membrane. Produces ATP from ADP in the presence of a proton gradient across the membrane. The sequence is that of ATP synthase epsilon chain from Pelagibacter ubique (strain HTCC1062).